A 492-amino-acid polypeptide reads, in one-letter code: N-succinylglutamate 5-semialdehyde dehydrogenase (492 aa).

220-225 serves as a coordination point for NAD(+); sequence GSSTTG. Active-site residues include Glu-243 and Cys-277.

It belongs to the aldehyde dehydrogenase family. AstD subfamily.

The catalysed reaction is N-succinyl-L-glutamate 5-semialdehyde + NAD(+) + H2O = N-succinyl-L-glutamate + NADH + 2 H(+). Its pathway is amino-acid degradation; L-arginine degradation via AST pathway; L-glutamate and succinate from L-arginine: step 4/5. Catalyzes the NAD-dependent reduction of succinylglutamate semialdehyde into succinylglutamate. The protein is N-succinylglutamate 5-semialdehyde dehydrogenase of Klebsiella pneumoniae subsp. pneumoniae (strain ATCC 700721 / MGH 78578).